The sequence spans 450 residues: MKHNLPADLVTLWRDSPGYESARSRTFNQRIPPELPYAIVRPKNMEQIQHAVQLAVDLDKQIRIRSGGHSLAGWTLCADSILIDLVDFRHLEYDATTAIASASPSATSAQLNDLLVPHGRFVPVGHCGDVGLGGFFLQGGMGLNCRSYGWACEYLVGVDLITADGEYKHCSESENADLFWAARGAGPEFPAIVTRFFIRTRPAAAKYEKSTFIWPVACSDAVVSWILKILPELHADIEPLVVSTIVPGLNVAAILVQFLVFLSTNETGAEKLGPSLTAMPDGTLMEFKGVPTSIQQEYVSQEGTMPRDSRYICDSVWFKDGIDFVTVTRRMFREFPRDRSMVYWEPKYPTSRRQLPDMAFSLQADQYLALFAIFEDSQQDEEQGIRIQEFIQEIEPYVLGTFAADGMPAVRKTQYWSAEVIERLYSVCQKWDPAHRLGCTLLDPTRKVKS.

Residues 32-203 (PPELPYAIVR…TRFFIRTRPA (172 aa)) form the FAD-binding PCMH-type domain.

It belongs to the oxygen-dependent FAD-linked oxidoreductase family. FAD is required as a cofactor.

It participates in secondary metabolite biosynthesis. Functionally, FAD-linked oxidoreductase; part of the gene cluster that mediates the biosynthesis of the indole diterpenes penitrems. The geranylgeranyl diphosphate (GGPP) synthase ptmG catalyzes the first step in penitrem biosynthesis via conversion of farnesyl pyrophosphate and isopentyl pyrophosphate into geranylgeranyl pyrophosphate (GGPP). Condensation of indole-3-glycerol phosphate with GGPP by the prenyl transferase ptmC then forms 3-geranylgeranylindole (3-GGI). Epoxidation by the FAD-dependent monooxygenase ptmM leads to a epoxidized-GGI that is substrate of the terpene cyclase ptmB for cyclization to yield paspaline. Paspaline is subsequently converted to 13-desoxypaxilline by the cytochrome P450 monooxygenase ptmP, the latter being then converted to paxilline by the cytochrome P450 monooxygenase ptmQ. Paxilline is converted to beta-paxitriol via C-10 ketoreduction by the short-chain dehydrogenase ptmH which can be monoprenylated at the C-20 by the indole diterpene prenyltransferase ptmD. A two-step elimination (acetylation and elimination) process performed by the O-acetyltransferase ptmV and ptmI leads to the production of the prenylated form of penijanthine. The FAD-linked oxidoreductase ptmO then converts the prenylated form of penijanthine into PC-M5 which is in turn transformed into PC-M4 by the aromatic dimethylallyltransferase ptmE. Five sequential oxidative transformations performed by the cytochrome P450 monooxygenases ptmK, ptmU, ptmL, ptmN and ptmJ yield the various penitrem compounds. PtmK, ptmU and ptmM are involved in the formation of the key bicyclic ring of penitrem C via the formation of the intermediates secopenitrem D and penitrem D. PtmL catalyzes the epoxidation of penitrem D and C to yield penitrem B and F, respectively. PtmJ catalyzes the last benzylic hydroxylation to convert penitrem B to prenitrem E and penitrem F to penitrem A. This Penicillium ochrochloron protein is FAD-linked oxidoreductase ptmO.